Reading from the N-terminus, the 378-residue chain is Small RNA 2'-O-methyltransferase (378 aa).

Asp-61 serves as a coordination point for S-adenosyl-L-methionine. The Mg(2+) site is built by Glu-114, Glu-117, His-118, and His-176.

This sequence belongs to the methyltransferase superfamily. HEN1 family. Requires Mg(2+) as cofactor.

Its subcellular location is the cytoplasm. The catalysed reaction is small RNA 3'-end nucleotide + S-adenosyl-L-methionine = small RNA 3'-end 2'-O-methylnucleotide + S-adenosyl-L-homocysteine + H(+). Methyltransferase that adds a 2'-O-methyl group at the 3'-end of small RNAs. The sequence is that of Small RNA 2'-O-methyltransferase from Schizosaccharomyces pombe (strain 972 / ATCC 24843) (Fission yeast).